The chain runs to 266 residues: MKLSLSPPPYADAPVVVLISGLGGSGSYWLPQLAVLEQEYQVVCYDQRGTGNNPDTLAEDYSIAQMAAELHQALVAAGIEHYAVVGHALGALVGMQLALDYPASVTVLISVNGWLRINAHTRRCFQVRERLLYSGGAQAWVEAQPLFLYPADWMAARAPRLEAEDALALAHFQGKNNLLRRLNALKRADFSHHADRIRCPVQIICASDDLLVPSACSSELHAALPDSQKMVMRYGGHACNVTDPETFNALLLNGLASLLHHREAAL.

The AB hydrolase-1 domain occupies 14–115; the sequence is PVVVLISGLG…TVLISVNGWL (102 aa).

The protein belongs to the AB hydrolase superfamily. Hydrolase RutD family.

The enzyme catalyses carbamate + 2 H(+) = NH4(+) + CO2. Functionally, involved in pyrimidine catabolism. May facilitate the hydrolysis of carbamate, a reaction that can also occur spontaneously. This is Putative carbamate hydrolase RutD from Shigella sonnei (strain Ss046).